A 91-amino-acid polypeptide reads, in one-letter code: Putative regulatory protein Moth_0891 (91 aa).

The protein belongs to the RemA family.

This is Putative regulatory protein Moth_0891 from Moorella thermoacetica (strain ATCC 39073 / JCM 9320).